Reading from the N-terminus, the 59-residue chain is Chromatin protein Cren7 (59 aa).

Belongs to the Cren7 family. As to quaternary structure, monomer. In terms of processing, methylated at multiple sites, to varying extents.

It localises to the chromosome. The protein resides in the cytoplasm. A chromatin protein, binds double-stranded DNA without sequence specificity. Constrains negative DNA supercoils. The protein is Chromatin protein Cren7 of Pyrobaculum aerophilum (strain ATCC 51768 / DSM 7523 / JCM 9630 / CIP 104966 / NBRC 100827 / IM2).